Consider the following 1031-residue polypeptide: MADPGDLESRGKADSYSVAEKKSAPKKISKKNANKAKLEDLKKELEMTEHSMKLESLLSMYETSLEKGLSENIVARNLERDGLNALTPPKQTPEWVKFCKQMFGGFSMLLWIGAILCFFAFGIRAVRDTNPNMDELYLGIVLSVVVIITGCFSYYQESKSSKIMESFKKMIPQEALVLRDGKKITINAEQCVVGDVVFVKFGDRIPADIRIVECKGLKVDNSSLTGESEPQSRAVDFTHENPIETKNLAFFSTNAVEGTATGIVVRIGDNTVMGRIANLASGLGSGKTPIALEIEHFIHIVTGVAVFLGVSFLIISLAMGYHWLEAIIFLIGIIVANVPEGLLATVTVCLTLTAKKMAKKNCLVKHLEAVETLGSTSVICSDKTGTLTQNRMTVAHMWFDKMIVEADTTEDQSGIAHDKGSLTWKSLAKVAALCSRAEFKPNQNDVAVLRKECTGDASETAILKFVELSVGNVMDIRAKNKKVTEIPFNSTNKYQVSVHEQENSSGYLLVMKGAPEKVLERCSTILINGEEQPLKDDVIEIYNKAYDELGGLGERVLGFCHYYLPVDQYPKGFLFKTEEEQNFPLEGLCFLGLLSMIDPPRAAVPDAVSKCRSAGIKVIMVTGDHPITAKAIAKGVGIISEGNECEEDIALRLNIPLEDLSEDQKKSAKACVIHGAKLKDIKNEELDKILCDHTEIVFARTSPQQKLIIVEGCQRQGAIVAVTGDGVNDSPALKKADIGVAMGIAGSDVSKQAADMILLDDNFASIVTGVEEGRLIFDNLKKSIVYTLTSNIPEISPFLMFILFGIPLPLGTITILCIDLGTDMVPAISLAYEKAESDIMKRHPRNPIRDKLVNERLISLAYGQIGMMQATAGFFTYFIILAENGFLPSYLFGLRSQWDDMSNNNLLDSFGSEWTYFQRKEIELTCQTAFFTTIVVVQWADLIISKTRRLSLFQQGMTNWFLNFGLFFETALAAFLQYTPGVNTGLRLRPMNFTWWLPGLPFSLLIFVYDEIRRYLLRKNPGGWVEKETYY.

The tract at residues 1 to 33 is disordered; sequence MADPGDLESRGKADSYSVAEKKSAPKKISKKNA. Basic and acidic residues predominate over residues 7–23; sequence LESRGKADSYSVAEKKS. Basic residues predominate over residues 24–33; that stretch reads APKKISKKNA. 4 helical membrane passes run 102–123, 136–155, 297–319, and 326–354; these read MFGG…AFGI, LYLG…FSYY, FIHI…SLAM, and AIIF…TLTA. D382 functions as the 4-aspartylphosphate intermediate in the catalytic mechanism. Residue K512 participates in ATP binding. Positions 725 and 729 each coordinate Mg(2+). 4 consecutive transmembrane segments (helical) span residues 795 to 818, 857 to 882, 924 to 944, and 961 to 986; these read ISPF…ILCI, LISL…IILA, LTCQ…DLII, and FLNF…NTGL.

Belongs to the cation transport ATPase (P-type) (TC 3.A.3) family. Type IIC subfamily. In terms of assembly, the sodium/potassium-transporting ATPase is composed of a catalytic alpha subunit, an auxiliary non-catalytic beta subunit and an additional regulatory subunit.

It localises to the cell membrane. It carries out the reaction K(+)(out) + Na(+)(in) + ATP + H2O = K(+)(in) + Na(+)(out) + ADP + phosphate + H(+). Its activity is regulated as follows. This alpha subunit is resistant to ouabain. Its function is as follows. This is the catalytic component of the active enzyme, which catalyzes the hydrolysis of ATP coupled with the exchange of sodium and potassium ions across the plasma membrane. This action creates the electrochemical gradient of sodium and potassium ions, providing the energy for active transport of various nutrients. This is Sodium/potassium-transporting ATPase subunit alpha from Hydra vulgaris (Hydra).